The chain runs to 360 residues: Photosystem II protein D1 (360 aa).

3 helical membrane-spanning segments follow: residues 30 to 47 (YVGW…AAAA), 119 to 134 (HFLI…QWEL), and 143 to 157 (WICV…AAFA). Residue His-119 participates in chlorophyll a binding. Residue Tyr-127 participates in pheophytin a binding. The [CaMn4O5] cluster site is built by Asp-171 and Glu-190. Residues 198–219 (FHMAGVAGMFGGSLFSAMHGSL) traverse the membrane as a helical segment. A chlorophyll a-binding site is contributed by His-199. Residues His-216 and 265–266 (SF) each bind a quinone. A Fe cation-binding site is contributed by His-216. His-273 serves as a coordination point for Fe cation. A helical membrane pass occupies residues 275–289 (FLAVFPVVCVWLTSM). Residues His-333, Glu-334, Asp-343, and Ala-345 each coordinate [CaMn4O5] cluster. A propeptide spanning residues 346-360 (AAESTTVALTAPAIG) is cleaved from the precursor.

It belongs to the reaction center PufL/M/PsbA/D family. PSII is composed of 1 copy each of membrane proteins PsbA, PsbB, PsbC, PsbD, PsbE, PsbF, PsbH, PsbI, PsbJ, PsbK, PsbL, PsbM, PsbT, PsbX, PsbY, Psb30/Ycf12, peripheral proteins PsbO, CyanoQ (PsbQ), PsbU, PsbV and a large number of cofactors. It forms dimeric complexes. The D1/D2 heterodimer binds P680, chlorophylls that are the primary electron donor of PSII, and subsequent electron acceptors. It shares a non-heme iron and each subunit binds pheophytin, quinone, additional chlorophylls, carotenoids and lipids. D1 provides most of the ligands for the Mn4-Ca-O5 cluster of the oxygen-evolving complex (OEC). There is also a Cl(-1) ion associated with D1 and D2, which is required for oxygen evolution. The PSII complex binds additional chlorophylls, carotenoids and specific lipids. is required as a cofactor. In terms of processing, tyr-162 forms a radical intermediate that is referred to as redox-active TyrZ, YZ or Y-Z. C-terminally processed by CtpA; processing is essential to allow assembly of the oxygen-evolving complex and thus photosynthetic growth.

It is found in the cellular thylakoid membrane. The enzyme catalyses 2 a plastoquinone + 4 hnu + 2 H2O = 2 a plastoquinol + O2. Its function is as follows. Photosystem II (PSII) is a light-driven water:plastoquinone oxidoreductase that uses light energy to abstract electrons from H(2)O, generating O(2) and a proton gradient subsequently used for ATP formation. It consists of a core antenna complex that captures photons, and an electron transfer chain that converts photonic excitation into a charge separation. The D1/D2 (PsbA/PsbD) reaction center heterodimer binds P680, the primary electron donor of PSII as well as several subsequent electron acceptors. This chain is Photosystem II protein D1, found in Prochlorococcus marinus (strain MIT 9515).